The primary structure comprises 66 residues: Sarcoplasmic/endoplasmic reticulum calcium ATPase regulator ARLN (66 aa).

Met-1 is subject to N-acetylmethionine. Positions 1–37 (MEVDAPGVDGRDGLRERRGFSEGGRQNFDVRPQSGAN) are disordered. The segment covering 9 to 20 (DGRDGLRERRGF) has biased composition (basic and acidic residues). Residues 45-65 (WLDLWLFILFDVVVFLFVYFL) traverse the membrane as a helical segment.

Homooligomer. Can also form heterooligomers with other sarcoplasmic/endoplasmic reticulum calcium ATPase (SERCA) regulators ERLN, PLN, SLN and STRIT1/DWORF. Monomer. Interacts as a monomer with ATP2A2/SERCA2; the interaction results in inhibition of ATP2A2 Ca(2+) affinity.

It localises to the endoplasmic reticulum membrane. Inhibits the activity of the calcium ATPases ATP2A2/SERCA2 and ATP2A3/SERCA3 by decreasing their apparent affinity for Ca(2+). This is Sarcoplasmic/endoplasmic reticulum calcium ATPase regulator ARLN from Homo sapiens (Human).